We begin with the raw amino-acid sequence, 294 residues long: Ribosomal protein L11 methyltransferase (294 aa).

4 residues coordinate S-adenosyl-L-methionine: Thr-146, Gly-167, Asp-189, and Asn-231.

It belongs to the methyltransferase superfamily. PrmA family.

The protein localises to the cytoplasm. The catalysed reaction is L-lysyl-[protein] + 3 S-adenosyl-L-methionine = N(6),N(6),N(6)-trimethyl-L-lysyl-[protein] + 3 S-adenosyl-L-homocysteine + 3 H(+). Methylates ribosomal protein L11. The polypeptide is Ribosomal protein L11 methyltransferase (Aliivibrio fischeri (strain ATCC 700601 / ES114) (Vibrio fischeri)).